Consider the following 209-residue polypeptide: Thymidylate kinase (209 aa).

10 to 17 is an ATP binding site; sequence GLDGAGKS.

This sequence belongs to the thymidylate kinase family.

It catalyses the reaction dTMP + ATP = dTDP + ADP. Functionally, phosphorylation of dTMP to form dTDP in both de novo and salvage pathways of dTTP synthesis. The polypeptide is Thymidylate kinase (Francisella tularensis subsp. holarctica (strain FTNF002-00 / FTA)).